Reading from the N-terminus, the 1054-residue chain is Proteoglycan 4 (1054 aa).

Residues 1–24 (MGWKILPVCLSLLLPVVLIQQVSS) form the signal peptide. SMB domains are found at residues 26–69 (DLSS…PELS) and 66–108 (PELS…EEVH). 14 disulfides stabilise this stretch: Cys30–Cys34, Cys30–Cys46, Cys34–Cys64, Cys44–Cys46, Cys44–Cys57, Cys50–Cys56, Cys57–Cys64, Cys70–Cys74, Cys70–Cys86, Cys74–Cys104, Cys84–Cys86, Cys84–Cys97, Cys90–Cys96, and Cys97–Cys104. An N-linked (GlcNAc...) asparagine glycan is attached at Asn109. Over residues 110–125 (STSPSSKTAPTPAGAS) the composition is skewed to low complexity. The interval 110–764 (STSPSSKTAP…PLIPGPPVLF (655 aa)) is disordered. Ser135 carries an O-linked (GalNAc...) serine glycan. The segment covering 162–175 (QESSSSSSSSSSTI) has biased composition (low complexity). The segment covering 188 to 200 (ELQKNPNVKDNKK) has biased composition (basic and acidic residues). Positions 229–238 (TPPPPDPPTT) are enriched in pro residues. O-linked (GalNAc...) threonine glycans are attached at residues Thr237 and Thr250. Over residues 286 to 295 (TTATNKQSSA) the composition is skewed to low complexity. A glycan (O-linked (GalNAc...) threonine) is linked at Thr301. Ser302 carries O-linked (GalNAc...) serine glycosylation. Residues 302 to 318 (SVKETRSAEKTSDKDVE) show a composition bias toward basic and acidic residues. The O-linked (GalNAc...) threonine glycan is linked to Thr306. The O-linked (GalNAc...) serine glycan is linked to Ser313. Residues 317-324 (VEPTSTTP) form a 1; approximate repeat. The interval 317–618 (VEPTSTTPKN…TPKKPEPTTT (302 aa)) is 37 X 8 AA repeats of K-X-P-X-P-T-T-X. A compositionally biased stretch (polar residues) spans 319–328 (PTSTTPKNSA). One copy of the 2; approximate repeat lies at 325-332 (KNSAPTTT). Residue Ser327 is glycosylated (O-linked (GalNAc...) serine). A compositionally biased stretch (low complexity) spans 329–339 (PTTTKKPVTTT). Residues Thr330, Thr338, Thr354, Thr362, Thr369, Thr377, Thr378, Thr385, Thr386, Thr393, and Thr394 are each glycosylated (O-linked (GalNAc...) threonine). A 3; approximate repeat occupies 333–340 (KKPVTTTK). The stretch at 349-356 (QEPEPTTA) is one 4; approximate repeat. Repeat 5 spans residues 357–364 (KEPPPTTK). Basic and acidic residues predominate over residues 364-399 (KKPEPTTRKEPEPTTPKEPEPTTPKEPEPTTPKEPE). The stretch at 365–371 (KPEPTTR) is one 6; approximate repeat. 5 tandem repeats follow at residues 372–379 (KEPEPTTP), 380–387 (KEPEPTTP), 388–395 (KEPEPTTP), 396–403 (KEPEPTTP), and 404–411 (KEPPPTTK). Residues 400–426 (PTTPKEPPPTTKKPEPTTPKEPGPTTP) are compositionally biased toward pro residues. The 12; approximate repeat unit spans residues 412–418 (KPEPTTP). O-linked (GalNAc...) threonine glycans are attached at residues Thr416, Thr417, Thr424, Thr432, Thr433, Thr440, Thr441, and Thr448. A run of 3 repeats spans residues 419-426 (KEPGPTTP), 427-434 (KEPEPTTT), and 435-442 (KEPEPTTT). Basic and acidic residues predominate over residues 427–550 (KEPEPTTTKE…PEPTTPKKPE (124 aa)). The stretch at 443–450 (KEPESTTR) is one 16; approximate repeat. 21 tandem repeats follow at residues 451-458 (KEPEPTTP), 459-466 (KEPEPTTP), 467-474 (KEPEPTTL), 475-482 (KEPEPTTP), 483-490 (KEPEPTTP), 491-498 (KEPEPTTP), 499-506 (KEPEPTTP), 507-514 (KEPEPTTP), 515-522 (KEPEPTTP), 523-530 (KEPEPTTP), 531-538 (KEPEPTTP), 539-546 (KEPEPTTP), 547-554 (KKPEPTTP), 555-562 (KEPVPTTP), 563-570 (KEPEPTTP), 571-578 (KEPEPTTP), 579-586 (KEPEPTTR), 587-594 (KEPEPTTP), 595-602 (KEPEPTTP), 603-610 (KEPEPTTP), and 611-618 (KKPEPTTT). O-linked (GalNAc...) threonine glycosylation is found at Thr472, Thr480, Thr481, Thr488, Thr489, Thr496, Thr497, Thr504, Thr505, Thr512, Thr520, Thr521, Thr528, and Thr529. Positions 551 to 562 (PTTPKEPVPTTP) are enriched in pro residues. Thr553, Thr560, Thr561, Thr568, Thr569, Thr576, and Thr577 each carry an O-linked (GalNAc...) threonine glycan. Basic and acidic residues predominate over residues 563–614 (KEPEPTTPKEPEPTTPKEPEPTTRKEPEPTTPKEPEPTTPKEPEPTTPKKPE). Residues Thr592, Thr600, and Thr601 are each glycosylated (O-linked (GalNAc...) threonine). Residues 615-624 (PTTTSPKTTT) show a composition bias toward low complexity. Thr622, Thr624, Thr628, Thr629, and Thr692 each carry an O-linked (GalNAc...) threonine glycan. Positions 672 to 699 (KPTKKPTKAPKKPTSTKKPKTPKTRKPK) are enriched in basic residues. Positions 700–712 (TTPSPLKTTSATP) are enriched in low complexity. Residues 713–735 (ELNTTPLEVMLPTTTIPKQTPNP) show a composition bias toward polar residues. An intrachain disulfide couples Cys795 to Cys1053. Hemopexin repeat units follow at residues 797–840 (GKPV…VWGI) and 841–888 (PSPI…FGGL). N-linked (GlcNAc...) asparagine glycosylation is present at Asn808. Thr810 is a glycosylation site (O-linked (GalNAc...) threonine). Asn938 carries an N-linked (GlcNAc...) asparagine glycan.

In terms of assembly, homodimer; disulfide-linked. Post-translationally, N-glycosylated. O-glycosylated; contains glycosaminoglycan chondroitin sulfate and keratan sulfate. O-glycosylated with sialylated oligosaccharides which are predominantly represented by the monosialylated core type I structure, NeuNAcalpha2-3Galbeta1-3GalNAc, with smaller amounts of disialylated O-glycans. In terms of processing, the disulfide bond between Cys-795 and Cys-1053 is essential for protein cleavage. Post-translationally, proteolytically cleaved by cathepsin CTSG. Highly expressed in cartilage, bone and liver and weakly expressed in heart, brain and muscle. Expressed in the surface chondrocytes and in synovial intimal cells. Isoform B is expressed in bone, small intestine, muscle, testis, heart, liver and lung. Isoform C and isoform D are widely expressed.

Its subcellular location is the secreted. Its function is as follows. Plays a role in boundary lubrication within articulating joints. Prevents protein deposition onto cartilage from synovial fluid by controlling adhesion-dependent synovial growth and inhibiting the adhesion of synovial cells to the cartilage surface. The protein is Proteoglycan 4 (Prg4) of Mus musculus (Mouse).